A 194-amino-acid chain; its full sequence is CMRF35-like molecule 5 (194 aa).

A signal peptide spans 1–18; the sequence is MWLSPSLLLLILPGYSIA. The Ig-like V-type domain occupies 19–125; that stretch reads AKITGPTTVN…LGVKVQVTIN (107 aa). Residues 19-165 lie on the Extracellular side of the membrane; that stretch reads AKITGPTTVN…LTRSPLKSTH (147 aa). Residue asparagine 28 is glycosylated (N-linked (GlcNAc...) asparagine). Cysteines 39 and 107 form a disulfide. The chain crosses the membrane as a helical span at residues 166–186; it reads FLFLFLLELPLLLSMLGTVLW. Topologically, residues 187 to 194 are cytoplasmic; sequence VNRPQRRS.

The protein belongs to the CD300 family. As to quaternary structure, forms complexes with the CD300 family members with exception of CD300c. In terms of processing, N-glycosylated. As to expression, expression seems restricted to cells of myeloid lineage.

It localises to the cell membrane. The protein is CMRF35-like molecule 5 (CD300LD) of Homo sapiens (Human).